Consider the following 222-residue polypeptide: N-(5'-phosphoribosyl)anthranilate isomerase (222 aa).

Belongs to the TrpF family.

It carries out the reaction N-(5-phospho-beta-D-ribosyl)anthranilate = 1-(2-carboxyphenylamino)-1-deoxy-D-ribulose 5-phosphate. The protein operates within amino-acid biosynthesis; L-tryptophan biosynthesis; L-tryptophan from chorismate: step 3/5. This Xanthomonas oryzae pv. oryzae (strain PXO99A) protein is N-(5'-phosphoribosyl)anthranilate isomerase.